A 337-amino-acid polypeptide reads, in one-letter code: Eukaryotic translation initiation factor 3 subunit I (337 aa).

WD repeat units follow at residues 8–47, 50–91, 147–186, 191–230, and 288–327; these read GHER…RLGT, GHQG…KVWD, CTES…QLEN, EFDH…ILKT, and GHFG…FDFM.

The protein belongs to the eIF-3 subunit I family. Component of the eukaryotic translation initiation factor 3 (eIF-3) complex.

It is found in the cytoplasm. Component of the eukaryotic translation initiation factor 3 (eIF-3) complex, which is involved in protein synthesis of a specialized repertoire of mRNAs and, together with other initiation factors, stimulates binding of mRNA and methionyl-tRNAi to the 40S ribosome. The eIF-3 complex specifically targets and initiates translation of a subset of mRNAs involved in cell proliferation. In Aspergillus niger (strain ATCC MYA-4892 / CBS 513.88 / FGSC A1513), this protein is Eukaryotic translation initiation factor 3 subunit I (tif34).